Here is a 296-residue protein sequence, read N- to C-terminus: Claudin-23 (296 aa).

At 1–2 (MR) the chain is on the cytoplasmic side. The helical transmembrane segment at 3–23 (TPVVMTLGMVLTPCGLLLNLV) threads the bilayer. The Extracellular segment spans residues 24 to 81 (STLAPGWRLVKGFLDQPVDVVLYQGLWDICREQSSRERECGQPDEWNYFQTQPVQVAR). Residues 82–102 (GLMITSLATTALGLLLASLGV) traverse the membrane as a helical segment. Over 103–111 (RCWQDEPHY) the chain is Cytoplasmic. A helical transmembrane segment spans residues 112-132 (GLAGLSGVVFFVAGLFSLIPV). Over 133–160 (SWYNHFLSDPDVLAAPSSPVTVQVSYSL) the chain is Extracellular. The chain crosses the membrane as a helical span at residues 161 to 181 (VLGYLGSCLLLLGGFSLALSF). Residues 182–296 (APWCEERCRR…QNSLPCDSDL (115 aa)) lie on the Cytoplasmic side of the membrane. The disordered stretch occupies residues 224-296 (YSDGQHRPPP…QNSLPCDSDL (73 aa)). The span at 273–284 (TSQGGSSSRSTR) shows a compositional bias: low complexity. The segment covering 285-296 (PCQNSLPCDSDL) has biased composition (polar residues).

Belongs to the claudin family.

The protein localises to the cell junction. It is found in the tight junction. Its subcellular location is the cell membrane. Its function is as follows. Plays a major role in tight junction-specific obliteration of the intercellular space, through calcium-independent cell-adhesion activity. The chain is Claudin-23 (Cldn23) from Mus musculus (Mouse).